Here is a 216-residue protein sequence, read N- to C-terminus: MPIGVPKVPYRIPGDEEATWVDLYNVMYRERTLFLGQEIRCEVTNHITGLMVYLSIEDGISDIFLFINSPGGWLISGMAIFDTMQTVTPDIYTICLGIAASMASFILLGGEPTKRIAFPHARIMLHQPASAYYRARTPEFLLEVEELHKVREMITRVYALRTGKPFWVVSEDMERDVFMSADEAKAYGLVDIVGDEMLDEHCDTDPVWFPEMFKDW.

Serine 101 acts as the Nucleophile in catalysis. Histidine 126 is an active-site residue.

Belongs to the peptidase S14 family. In terms of assembly, component of the chloroplastic Clp protease core complex.

The protein localises to the plastid. Its subcellular location is the chloroplast stroma. It carries out the reaction Hydrolysis of proteins to small peptides in the presence of ATP and magnesium. alpha-casein is the usual test substrate. In the absence of ATP, only oligopeptides shorter than five residues are hydrolyzed (such as succinyl-Leu-Tyr-|-NHMec, and Leu-Tyr-Leu-|-Tyr-Trp, in which cleavage of the -Tyr-|-Leu- and -Tyr-|-Trp bonds also occurs).. In terms of biological role, cleaves peptides in various proteins in a process that requires ATP hydrolysis. Has a chymotrypsin-like activity. Plays a major role in the degradation of misfolded proteins. The polypeptide is ATP-dependent Clp protease proteolytic subunit (Oryza nivara (Indian wild rice)).